Consider the following 422-residue polypeptide: Sphingomyelin phosphodiesterase 2 (422 aa).

Residue E49 coordinates Mg(2+). The active-site Proton acceptor is H272. 2 consecutive transmembrane segments (helical) span residues 325 to 345 and 354 to 374; these read ALFG…CVLA and AIML…VYLF. The interval 397–422 is disordered; it reads TETQDLGSEPHPTHCRQQEADRAEEK. Residues 412-422 show a composition bias toward basic and acidic residues; the sequence is RQQEADRAEEK.

This sequence belongs to the neutral sphingomyelinase family. The cofactor is Mg(2+).

It localises to the membrane. It catalyses the reaction a sphingomyelin + H2O = phosphocholine + an N-acylsphing-4-enine + H(+). The catalysed reaction is 1-O-octadecyl-sn-glycero-3-phosphocholine + H2O = 1-O-octadecyl-sn-glycerol + phosphocholine + H(+). The enzyme catalyses an N-(acyl)-sphingosylphosphocholine + H2O = an N-acyl-sphingoid base + phosphocholine + H(+). It carries out the reaction 1-hexadecanoyl-sn-glycero-3-phosphocholine + H2O = 1-hexadecanoyl-sn-glycerol + phosphocholine + H(+). It catalyses the reaction a sphingosylphosphocholine + H2O = a sphingoid base + phosphocholine + H(+). The catalysed reaction is 1-O-hexadecyl-sn-glycero-3-phosphocholine + H2O = 1-O-hexadecyl-sn-glycerol + phosphocholine + H(+). Its pathway is lipid metabolism; sphingolipid metabolism. Functionally, catalyzes the hydrolysis of sphingomyelin to form ceramide and phosphocholine. Ceramide mediates numerous cellular functions, such as apoptosis and growth arrest, and is capable of regulating these 2 cellular events independently. Also hydrolyzes sphingosylphosphocholine. Hydrolyze 1-acyl-2-lyso-sn-glycero-3-phosphocholine (lyso-PC) and 1-O-alkyl-2-lyso-sn-glycero-3-phosphocholine (lyso-platelet-activating factor). This is Sphingomyelin phosphodiesterase 2 (Smpd2) from Rattus norvegicus (Rat).